The following is a 63-amino-acid chain: Phylloseptin-Az1 (63 aa).

An N-terminal signal peptide occupies residues 1–19 (LKKSLFLVVFLGLATLSIC). Positions 20–41 (EEEKRETEEEEYNQGEDDKSEE) are excised as a propeptide. A Phenylalanine amide modification is found at F62.

In terms of tissue distribution, expressed by the skin glands.

It is found in the secreted. In terms of biological role, has antimicrobial activity. This is Phylloseptin-Az1 from Pithecopus azureus (Orange-legged monkey tree frog).